The sequence spans 400 residues: Signal recognition particle receptor FtsY (400 aa).

Disordered regions lie at residues 12–37 (TKKT…QEEQ) and 51–86 (NKIK…KDKK). The span at 51 to 72 (NKIKKTKTSETKKQEKPIETLK) shows a compositional bias: basic and acidic residues. GTP contacts are provided by residues 192–199 (GVNGTGKT), 278–282 (DTAGR), and 342–345 (TKMD).

This sequence belongs to the GTP-binding SRP family. FtsY subfamily. As to quaternary structure, part of the signal recognition particle protein translocation system, which is composed of SRP and FtsY.

Its subcellular location is the cell membrane. It is found in the cytoplasm. It catalyses the reaction GTP + H2O = GDP + phosphate + H(+). In terms of biological role, involved in targeting and insertion of nascent membrane proteins into the cytoplasmic membrane. Acts as a receptor for the complex formed by the signal recognition particle (SRP) and the ribosome-nascent chain (RNC). In Mycoplasma mycoides subsp. mycoides SC (strain CCUG 32753 / NCTC 10114 / PG1), this protein is Signal recognition particle receptor FtsY.